A 437-amino-acid polypeptide reads, in one-letter code: Adenylosuccinate synthetase (437 aa).

GTP is bound by residues 12–18 and 40–42; these read GDEGKGK and GHT. The active-site Proton acceptor is the D13. Mg(2+)-binding residues include D13 and G40. IMP is bound by residues 13–16, 38–41, T128, R142, Q223, T238, and R302; these read DEGK and NAGH. H41 serves as the catalytic Proton donor. A substrate-binding site is contributed by 298–304; sequence TTTGRRR. GTP-binding positions include R304, 330-332, and 412-414; these read KLD and SLG.

Belongs to the adenylosuccinate synthetase family. In terms of assembly, homodimer. It depends on Mg(2+) as a cofactor.

It localises to the cytoplasm. The catalysed reaction is IMP + L-aspartate + GTP = N(6)-(1,2-dicarboxyethyl)-AMP + GDP + phosphate + 2 H(+). Its pathway is purine metabolism; AMP biosynthesis via de novo pathway; AMP from IMP: step 1/2. Plays an important role in the de novo pathway of purine nucleotide biosynthesis. Catalyzes the first committed step in the biosynthesis of AMP from IMP. This is Adenylosuccinate synthetase from Prochlorococcus marinus (strain MIT 9211).